A 396-amino-acid chain; its full sequence is NADH-quinone oxidoreductase subunit D (396 aa).

It belongs to the complex I 49 kDa subunit family. NDH-1 is composed of 14 different subunits. Subunits NuoB, C, D, E, F, and G constitute the peripheral sector of the complex.

Its subcellular location is the cell inner membrane. It carries out the reaction a quinone + NADH + 5 H(+)(in) = a quinol + NAD(+) + 4 H(+)(out). In terms of biological role, NDH-1 shuttles electrons from NADH, via FMN and iron-sulfur (Fe-S) centers, to quinones in the respiratory chain. The immediate electron acceptor for the enzyme in this species is believed to be ubiquinone. Couples the redox reaction to proton translocation (for every two electrons transferred, four hydrogen ions are translocated across the cytoplasmic membrane), and thus conserves the redox energy in a proton gradient. This is NADH-quinone oxidoreductase subunit D from Methylorubrum extorquens (strain PA1) (Methylobacterium extorquens).